Reading from the N-terminus, the 118-residue chain is Immunoglobulin heavy variable 4-30-2 (118 aa).

Positions 1–19 (MKHLWFFLLLVAAPRWVLS) are cleaved as a signal peptide. Positions 20–44 (QLQLQESGSGLVKPSQTLSLTCAVS) are framework-1. The Ig-like domain maps to 20–118 (QLQLQESGSG…ADTAVYYCAR (99 aa)). A disulfide bond links Cys41 and Cys116. The segment at 45–54 (GGSISSGGYS) is complementarity-determining-1. A framework-2 region spans residues 55–71 (WSWIRQPPGKGLEWIGY). Residues 72 to 78 (IYHSGST) are complementarity-determining-2. The framework-3 stretch occupies residues 79–116 (YYNPSLKSRVTISVDRSKNQFSLKLSSVTAADTAVYYC). The complementarity-determining-3 stretch occupies residues 117–118 (AR).

In terms of assembly, immunoglobulins are composed of two identical heavy chains and two identical light chains; disulfide-linked.

It localises to the secreted. It is found in the cell membrane. In terms of biological role, v region of the variable domain of immunoglobulin heavy chains that participates in the antigen recognition. Immunoglobulins, also known as antibodies, are membrane-bound or secreted glycoproteins produced by B lymphocytes. In the recognition phase of humoral immunity, the membrane-bound immunoglobulins serve as receptors which, upon binding of a specific antigen, trigger the clonal expansion and differentiation of B lymphocytes into immunoglobulins-secreting plasma cells. Secreted immunoglobulins mediate the effector phase of humoral immunity, which results in the elimination of bound antigens. The antigen binding site is formed by the variable domain of one heavy chain, together with that of its associated light chain. Thus, each immunoglobulin has two antigen binding sites with remarkable affinity for a particular antigen. The variable domains are assembled by a process called V-(D)-J rearrangement and can then be subjected to somatic hypermutations which, after exposure to antigen and selection, allow affinity maturation for a particular antigen. In Homo sapiens (Human), this protein is Immunoglobulin heavy variable 4-30-2.